Reading from the N-terminus, the 624-residue chain is Hemocyanin E chain (624 aa).

H169, H173, H200, H320, H324, and H360 together coordinate Cu cation. N445 is a glycosylation site (N-linked (GlcNAc...) asparagine). A disulfide bridge connects residues C529 and C577.

It belongs to the tyrosinase family. Hemocyanin subfamily. As to quaternary structure, tarantula hemocyanin is a 24-chain polymer with seven different chains identified. In terms of tissue distribution, hemolymph.

It localises to the secreted. The protein localises to the extracellular space. Its function is as follows. Hemocyanins are copper-containing oxygen carriers occurring freely dissolved in the hemolymph of many mollusks and arthropods. In Aphonopelma sp. (American tarantula), this protein is Hemocyanin E chain (HCE).